We begin with the raw amino-acid sequence, 153 residues long: Putative adenylate kinase (153 aa).

The ATP site is built by Gly12, Gly14, Lys15, Ser16, and Thr17. The interval 31 to 47 (EGNELAKEYGCLFDEEV) is NMP. An LID region spans residues 94-104 (ARGYSEEKIQE). Arg95 is an ATP binding site.

It belongs to the adenylate kinase family. AK6 subfamily. In terms of assembly, interacts with uS11. Not a structural component of 40S pre-ribosomes, but transiently interacts with them by binding to uS11.

The catalysed reaction is AMP + ATP = 2 ADP. It carries out the reaction ATP + H2O = ADP + phosphate + H(+). In terms of biological role, broad-specificity nucleoside monophosphate (NMP) kinase that catalyzes the reversible transfer of the terminal phosphate group between nucleoside triphosphates and monophosphates. Also has ATPase activity. Involved in the late maturation steps of the 30S ribosomal particles, specifically 16S rRNA maturation. While NMP activity is not required for ribosome maturation, ATPase activity is. Associates transiently with small ribosomal subunit protein uS11. ATP hydrolysis breaks the interaction with uS11. May temporarily remove uS11 from the ribosome to enable a conformational change of the ribosomal RNA that is needed for the final maturation step of the small ribosomal subunit. This is Putative adenylate kinase from Thermoplasma volcanium (strain ATCC 51530 / DSM 4299 / JCM 9571 / NBRC 15438 / GSS1).